Here is a 387-residue protein sequence, read N- to C-terminus: Putative ribosomal RNA large subunit methyltransferase MJ1649 (387 aa).

The 77-residue stretch at leucine 5–lysine 81 folds into the PUA domain.

It belongs to the methyltransferase superfamily. RlmI family.

It is found in the cytoplasm. This is Putative ribosomal RNA large subunit methyltransferase MJ1649 from Methanocaldococcus jannaschii (strain ATCC 43067 / DSM 2661 / JAL-1 / JCM 10045 / NBRC 100440) (Methanococcus jannaschii).